A 267-amino-acid polypeptide reads, in one-letter code: Type III pantothenate kinase (267 aa).

Position 6 to 13 (6 to 13) interacts with ATP; that stretch reads DVRNTHTT. 109-112 is a binding site for substrate; sequence GADR. The active-site Proton acceptor is the Asp-111. Asp-131 provides a ligand contact to K(+). Ser-134 provides a ligand contact to ATP. Residue Thr-186 coordinates substrate.

Belongs to the type III pantothenate kinase family. Homodimer. Requires NH4(+) as cofactor. The cofactor is K(+).

Its subcellular location is the cytoplasm. The catalysed reaction is (R)-pantothenate + ATP = (R)-4'-phosphopantothenate + ADP + H(+). It functions in the pathway cofactor biosynthesis; coenzyme A biosynthesis; CoA from (R)-pantothenate: step 1/5. In terms of biological role, catalyzes the phosphorylation of pantothenate (Pan), the first step in CoA biosynthesis. This Mycobacterium sp. (strain JLS) protein is Type III pantothenate kinase.